A 197-amino-acid polypeptide reads, in one-letter code: UPF0314 protein R03235 (197 aa).

2 consecutive transmembrane segments (helical) span residues 16–36 (ALWL…QHLM) and 152–172 (LPVA…GYMV).

It belongs to the UPF0314 family.

The protein localises to the cell membrane. The protein is UPF0314 protein R03235 of Rhizobium meliloti (strain 1021) (Ensifer meliloti).